The chain runs to 221 residues: Max dimerization protein 1 (221 aa).

The short motif at 21–49 is the Nuclear localization signal element; that stretch reads RREREAEHGYASMLPYNSKERDGLKRKSK. Disordered stretches follow at residues 29-67 and 178-221; these read GYASMLPYNSKERDGLKRKSKSKKSSSSRSTHNEMEKNR and SSSS…SIAL. The bHLH domain maps to 55–107; it reads SSRSTHNEMEKNRRAHLRLCLEKLKMLVPLGPESNRHTTLSLLMRAKLHIKKL. Over residues 193–221 the composition is skewed to polar residues; sequence MQSICSDEGYSSSGLKSIGLQNNPKSIAL.

Heterodimer with MAX; the interaction is required for DNA-binding. DNA binding requires dimerization with another bHLH protein; does not form homodimers, and does not bind to DNA in the absence of MAX in vitro. Expressed primarily in cells that have undergone terminal differentiation including notochord, floor plate and cement gland.

Its subcellular location is the nucleus. Functionally, component of a transcriptional repressor complex together with MAX. In complex with MAX binds to the core DNA sequence 5'-CAC[GA]TG-3'. Antagonizes MYC transcriptional activity by competing with MYC for MAX binding. Binds to the TERT promoter and represses telomerase expression, possibly by interfering with MYC binding. The protein is Max dimerization protein 1 (mxd1) of Xenopus laevis (African clawed frog).